Reading from the N-terminus, the 99-residue chain is Aspartyl/glutamyl-tRNA(Asn/Gln) amidotransferase subunit C (99 aa).

The protein belongs to the GatC family. As to quaternary structure, heterotrimer of A, B and C subunits.

The catalysed reaction is L-glutamyl-tRNA(Gln) + L-glutamine + ATP + H2O = L-glutaminyl-tRNA(Gln) + L-glutamate + ADP + phosphate + H(+). It catalyses the reaction L-aspartyl-tRNA(Asn) + L-glutamine + ATP + H2O = L-asparaginyl-tRNA(Asn) + L-glutamate + ADP + phosphate + 2 H(+). Allows the formation of correctly charged Asn-tRNA(Asn) or Gln-tRNA(Gln) through the transamidation of misacylated Asp-tRNA(Asn) or Glu-tRNA(Gln) in organisms which lack either or both of asparaginyl-tRNA or glutaminyl-tRNA synthetases. The reaction takes place in the presence of glutamine and ATP through an activated phospho-Asp-tRNA(Asn) or phospho-Glu-tRNA(Gln). This is Aspartyl/glutamyl-tRNA(Asn/Gln) amidotransferase subunit C from Mycobacterium leprae (strain Br4923).